We begin with the raw amino-acid sequence, 466 residues long: 3-isopropylmalate dehydratase large subunit (466 aa).

Residues C346, C406, and C409 each coordinate [4Fe-4S] cluster.

The protein belongs to the aconitase/IPM isomerase family. LeuC type 1 subfamily. Heterodimer of LeuC and LeuD. [4Fe-4S] cluster serves as cofactor.

The catalysed reaction is (2R,3S)-3-isopropylmalate = (2S)-2-isopropylmalate. It functions in the pathway amino-acid biosynthesis; L-leucine biosynthesis; L-leucine from 3-methyl-2-oxobutanoate: step 2/4. Its function is as follows. Catalyzes the isomerization between 2-isopropylmalate and 3-isopropylmalate, via the formation of 2-isopropylmaleate. The chain is 3-isopropylmalate dehydratase large subunit from Cytophaga hutchinsonii (strain ATCC 33406 / DSM 1761 / CIP 103989 / NBRC 15051 / NCIMB 9469 / D465).